The sequence spans 176 residues: NAD(P)H-quinone oxidoreductase subunit 6, chloroplastic (176 aa).

5 helical membrane passes run 10–30, 33–53, 61–81, 92–112, and 152–172; these read FLLVFLGLGLIVGGLGVVLLT, IYSAFSLGLVLVCISLFHIPA, AQLLIYVGAINVLIVFAVMFM, LWTVGDGVTSLVCTSIFVSLI, and FFLPFELISIILLVALIGAIA.

It belongs to the complex I subunit 6 family. As to quaternary structure, NDH is composed of at least 16 different subunits, 5 of which are encoded in the nucleus.

It is found in the plastid. The protein resides in the chloroplast thylakoid membrane. It catalyses the reaction a plastoquinone + NADH + (n+1) H(+)(in) = a plastoquinol + NAD(+) + n H(+)(out). It carries out the reaction a plastoquinone + NADPH + (n+1) H(+)(in) = a plastoquinol + NADP(+) + n H(+)(out). Functionally, NDH shuttles electrons from NAD(P)H:plastoquinone, via FMN and iron-sulfur (Fe-S) centers, to quinones in the photosynthetic chain and possibly in a chloroplast respiratory chain. The immediate electron acceptor for the enzyme in this species is believed to be plastoquinone. Couples the redox reaction to proton translocation, and thus conserves the redox energy in a proton gradient. This is NAD(P)H-quinone oxidoreductase subunit 6, chloroplastic (ndhG) from Nandina domestica (Heavenly bamboo).